The sequence spans 243 residues: Ribosomal RNA small subunit methyltransferase G (243 aa).

S-adenosyl-L-methionine contacts are provided by residues Gly97, Leu102, Val148–Glu149, and Arg161.

It belongs to the methyltransferase superfamily. RNA methyltransferase RsmG family.

The protein localises to the cytoplasm. It carries out the reaction guanosine(527) in 16S rRNA + S-adenosyl-L-methionine = N(7)-methylguanosine(527) in 16S rRNA + S-adenosyl-L-homocysteine. Specifically methylates the N7 position of guanine in position 527 of 16S rRNA. The polypeptide is Ribosomal RNA small subunit methyltransferase G (Paracidovorax citrulli (strain AAC00-1) (Acidovorax citrulli)).